A 196-amino-acid polypeptide reads, in one-letter code: Protein LURP-one-related 8 (196 aa).

This sequence belongs to the LOR family.

Its function is as follows. Might be related to the phospholipid scramblase and tubby-like superfamily of membrane tethered transcription factors. The protein is Protein LURP-one-related 8 of Arabidopsis thaliana (Mouse-ear cress).